The sequence spans 137 residues: ATP synthase epsilon chain (137 aa).

It belongs to the ATPase epsilon chain family. As to quaternary structure, F-type ATPases have 2 components, CF(1) - the catalytic core - and CF(0) - the membrane proton channel. CF(1) has five subunits: alpha(3), beta(3), gamma(1), delta(1), epsilon(1). CF(0) has three main subunits: a, b and c.

It localises to the cell membrane. Produces ATP from ADP in the presence of a proton gradient across the membrane. The polypeptide is ATP synthase epsilon chain (Caldicellulosiruptor saccharolyticus (strain ATCC 43494 / DSM 8903 / Tp8T 6331)).